A 467-amino-acid chain; its full sequence is MLKSAVYSILAASLVNAGTIPLGKLSDIDKIGTQTEIFPFLGGSGPYYSFPGDYGISRDLPESCEMKQVQMVGRHGERYPTVSKAKSIMTTWYKLSNYTGQFSGALSFLNDDYEFFIRDTKNLEMETTLANSVNVLNPYTGEMNAKRHARDFLAQYGYMVENQTSFAVFTSNSNRCHDTAQYFIDGLGDKFNISLQTISEAESAGANTLSAHHSCPAWDDDVNDDILKKYDTKYLSGIAKRLNKENKGLNLTSSDANTFFAWCAYEINARGYSDICNIFTKDELVRFSYGQDLETYYQTGPGYDVVRSVGANLFNASVKLLKESEVQDQKVWLSFTHDTDILNYLTTIGIIDDKNNLTAEHVPFMENTFHRSWYVPQGARVYTEKFQCSNDTYVRYVINDAVVPIETCSTGPGFSCEINDFYDYAEKRVAGTDFLKVCNVSSVSNSTELTFFWDWNTKHYNDTLLKQ.

Positions methionine 1–alanine 17 are cleaved as a signal peptide. Histidine 75 functions as the Nucleophile in the catalytic mechanism. Asparagine 97, asparagine 162, asparagine 192, asparagine 250, and asparagine 315 each carry an N-linked (GlcNAc...) asparagine glycan. Aspartate 338 serves as the catalytic Proton donor. Asparagine 356, asparagine 390, asparagine 439, asparagine 445, and asparagine 461 each carry an N-linked (GlcNAc...) asparagine glycan.

Belongs to the histidine acid phosphatase family. Post-translationally, glycosylated during secretion across the membrane.

The catalysed reaction is a phosphate monoester + H2O = an alcohol + phosphate. The polypeptide is Acid phosphatase PHO11 (PHO11) (Saccharomyces cerevisiae (strain ATCC 204508 / S288c) (Baker's yeast)).